A 470-amino-acid polypeptide reads, in one-letter code: Glutamate--tRNA ligase (470 aa).

The 'HIGH' region motif lies at 9-19; that stretch reads PSPTGFLHVGG. The 'KMSKS' region motif lies at 236-240; that stretch reads RLSKR. Lysine 239 contributes to the ATP binding site.

This sequence belongs to the class-I aminoacyl-tRNA synthetase family. Glutamate--tRNA ligase type 1 subfamily. As to quaternary structure, monomer.

It is found in the cytoplasm. The enzyme catalyses tRNA(Glu) + L-glutamate + ATP = L-glutamyl-tRNA(Glu) + AMP + diphosphate. Its function is as follows. Catalyzes the attachment of glutamate to tRNA(Glu) in a two-step reaction: glutamate is first activated by ATP to form Glu-AMP and then transferred to the acceptor end of tRNA(Glu). This is Glutamate--tRNA ligase from Legionella pneumophila (strain Corby).